The chain runs to 483 residues: Glutamate--tRNA ligase (483 aa).

Positions 11–21 (PSPTGHLHIGN) match the 'HIGH' region motif. Zn(2+) contacts are provided by cysteine 108, cysteine 110, histidine 135, and aspartate 137. Positions 252 to 256 (KLSKR) match the 'KMSKS' region motif. Residue lysine 255 participates in ATP binding.

This sequence belongs to the class-I aminoacyl-tRNA synthetase family. Glutamate--tRNA ligase type 1 subfamily. In terms of assembly, monomer. Zn(2+) serves as cofactor.

The protein localises to the cytoplasm. The catalysed reaction is tRNA(Glu) + L-glutamate + ATP = L-glutamyl-tRNA(Glu) + AMP + diphosphate. Catalyzes the attachment of glutamate to tRNA(Glu) in a two-step reaction: glutamate is first activated by ATP to form Glu-AMP and then transferred to the acceptor end of tRNA(Glu). The chain is Glutamate--tRNA ligase from Bacillus subtilis (strain 168).